The primary structure comprises 319 residues: MDIDEQIIQDYSNSKLDVVQIDGLVVLKIIKQCKEYLPELVPGQLLGLDIGTSLEVSNCFPFPPRDQEDENSESIADYQLEMMRFLREVNIDSNTVGWYTPTYLNSFFNESVIETQYNYQATINQKCVVIVYDPIKTSQGTLSLKCYRLTQSFMELFKDQSFSRERLDQANLSFNDIFEQIPIKIHNSQLINALLYEFDGASNNLTNSFDRLNISNNIYLEKVVEGMTDCLESLNQELNKVYINQRNIQTQKTNYIQQKFLEGQKVDEDELASMIKPLNPPSKLTSLLLTNQINNYTDQIHSFSGNSLTKLSLLKDLQK.

Residues 19-153 (VQIDGLVVLK…LKCYRLTQSF (135 aa)) form the MPN domain.

It belongs to the eIF-3 subunit H family. As to quaternary structure, component of the eukaryotic translation initiation factor 3 (eIF-3) complex.

It localises to the cytoplasm. Component of the eukaryotic translation initiation factor 3 (eIF-3) complex, which is involved in protein synthesis of a specialized repertoire of mRNAs and, together with other initiation factors, stimulates binding of mRNA and methionyl-tRNAi to the 40S ribosome. The eIF-3 complex specifically targets and initiates translation of a subset of mRNAs involved in cell proliferation. This is Eukaryotic translation initiation factor 3 subunit H (eif3H) from Dictyostelium discoideum (Social amoeba).